Reading from the N-terminus, the 418-residue chain is Enolase 1 (418 aa).

(2R)-2-phosphoglycerate is bound at residue Gln162. The active-site Proton donor is the Glu204. Asp241, Glu285, and Asp312 together coordinate Mg(2+). Lys337, Arg366, Ser367, and Lys388 together coordinate (2R)-2-phosphoglycerate. The active-site Proton acceptor is the Lys337.

The protein belongs to the enolase family. Mg(2+) is required as a cofactor.

It localises to the cytoplasm. Its subcellular location is the secreted. It is found in the cell surface. The enzyme catalyses (2R)-2-phosphoglycerate = phosphoenolpyruvate + H2O. The protein operates within carbohydrate degradation; glycolysis; pyruvate from D-glyceraldehyde 3-phosphate: step 4/5. Catalyzes the reversible conversion of 2-phosphoglycerate (2-PG) into phosphoenolpyruvate (PEP). It is essential for the degradation of carbohydrates via glycolysis. This chain is Enolase 1, found in Lactococcus lactis subsp. cremoris (strain SK11).